The primary structure comprises 173 residues: MSLLKILYYPDIRLRILAKPVKEINKKIQKIANDMIDTMYQEEGIGLAATQVNIPLQIIVVNTMEQKKNNLVLINPKIIKKEGDISIEEGCLSIPEYQASIPRSNYIQVQAVNLDGEKIEIEAKSILSICIQHEIDHLKGKLFIDYLSKFKRERIQKKFEKINKKNKKFSIKE.

Cysteine 91 and histidine 133 together coordinate Fe cation. Glutamate 134 is an active-site residue. Histidine 137 contributes to the Fe cation binding site.

It belongs to the polypeptide deformylase family. The cofactor is Fe(2+).

It catalyses the reaction N-terminal N-formyl-L-methionyl-[peptide] + H2O = N-terminal L-methionyl-[peptide] + formate. Removes the formyl group from the N-terminal Met of newly synthesized proteins. Requires at least a dipeptide for an efficient rate of reaction. N-terminal L-methionine is a prerequisite for activity but the enzyme has broad specificity at other positions. In Buchnera aphidicola subsp. Acyrthosiphon pisum (strain 5A), this protein is Peptide deformylase.